Reading from the N-terminus, the 80-residue chain is MKVLCEDVNGPRSSLGRAWSHMSWLYYQYLLVTALYMLEPWERTVFNSMLVSIVGMALYTGYIFMPQHILAILHYFEIVQ.

Residues 1 to 21 are Cytoplasmic-facing; that stretch reads MKVLCEDVNGPRSSLGRAWSH. Residues 22 to 38 traverse the membrane as a helical segment; sequence MSWLYYQYLLVTALYML. Residues 39-43 are Lumenal-facing; that stretch reads EPWER. The helical transmembrane segment at 44-66 threads the bilayer; that stretch reads TVFNSMLVSIVGMALYTGYIFMP. The Cytoplasmic portion of the chain corresponds to 67–80; it reads QHILAILHYFEIVQ.

It belongs to the SPTSS family. SPTSSA subfamily. As to quaternary structure, component of the serine palmitoyltransferase (SPT) complex, which is composed of SPTLC1, SPTLC2 or SPTLC3 and SPTSSA or SPTSSB. The heterodimer consisting of SPTLC1 and SPTLC2/SPTLC3 forms the catalytic core of the enzyme, while SPTSSA or SPTSSB subunits determine substrate specificity. SPT also interacts with ORMDL proteins, especially ORMDL3, which negatively regulate SPT activity in the presence of ceramides.

It localises to the endoplasmic reticulum membrane. It functions in the pathway lipid metabolism; sphingolipid metabolism. Its function is as follows. Component of the serine palmitoyltransferase multisubunit enzyme (SPT) that catalyzes the initial and rate-limiting step in sphingolipid biosynthesis by condensing L-serine and activated acyl-CoA (most commonly palmitoyl-CoA) to form long-chain bases. The SPT complex is composed of SPTLC1, SPTLC2 or SPTLC3 and SPTSSA or SPTSSB. Within this complex, the heterodimer consisting of SPTLC1 and SPTLC2/SPTLC3 forms the catalytic core. Within the SPT complex, SPTSSA stimulates the catalytic activity and plays a role in substrate specificity, which depends upon the overall complex composition. The SPTLC1-SPTLC2-SPTSSA complex shows a strong preference for C16-CoA substrate, while the SPTLC1-SPTLC3-SPTSSA isozyme uses both C14-CoA and C16-CoA as substrates, with a slight preference for C14-CoA. Independently of its action as a SPT component, may be involved in MBOAT7 localization to mitochondria-associated membranes, a membrane bridge between the endoplasmic reticulum and mitochondria, may hence affect MBOAT7-catalyzed incorporation of arachidonic acid into phosphatidylinositol. The chain is Serine palmitoyltransferase small subunit A-A (sptssa-a) from Xenopus laevis (African clawed frog).